Consider the following 541-residue polypeptide: DEAD-box ATP-dependent RNA helicase 57 (541 aa).

Residues 43–52 (VEEEEDTEQP) are compositionally biased toward acidic residues. Positions 43-72 (VEEEEDTEQPEAEKVIVSSKKRKRRSSNSV) are disordered. The short motif at 141–169 (ELSSRYGCEGYILRNLAELGFKEPTPIQR) is the Q motif element. One can recognise a Helicase ATP-binding domain in the interval 172–342 (IPILLSGREC…RSIMHDAVRV (171 aa)). Residue 185 to 192 (APTGSGKT) participates in ATP binding. The DEAD box motif lies at 289–292 (DESD). Residues 370–514 (ALRQSFAESL…EVPSWIMSLK (145 aa)) form the Helicase C-terminal domain. The disordered stretch occupies residues 517–541 (KWRKHRPRRDSISTKPKADKNDTDE). Over residues 525–541 (RDSISTKPKADKNDTDE) the composition is skewed to basic and acidic residues.

Belongs to the DEAD box helicase family. DDX52/ROK1 subfamily.

The catalysed reaction is ATP + H2O = ADP + phosphate + H(+). This Arabidopsis thaliana (Mouse-ear cress) protein is DEAD-box ATP-dependent RNA helicase 57 (RH57).